A 216-amino-acid polypeptide reads, in one-letter code: Ethylene-inducing xylanase (216 aa).

The N-terminal stretch at 1 to 19 (MVSFSSLFVAACAAVTAFA) is a signal peptide. The 189-residue stretch at 28–216 (AITTSQQGTS…SSGSSDITVS (189 aa)) folds into the GH11 domain. E112 (nucleophile) is an active-site residue. The active-site Proton donor is the E203.

It belongs to the glycosyl hydrolase 11 (cellulase G) family.

The protein localises to the secreted. The catalysed reaction is Endohydrolysis of (1-&gt;4)-beta-D-xylosidic linkages in xylans.. It participates in glycan degradation; xylan degradation. Functionally, endo-1,4-beta-xylanase involved in the hydrolysis of xylan, a major structural heterogeneous polysaccharide found in plant biomass representing the second most abundant polysaccharide in the biosphere, after cellulose. Acts as a pathogen-associated molecular pattern (PAMP) that can trigger plant cell death. Triggers a series of immune responses in citrus fruit and enhanced the resistance of citrus and other fruit against fungal pathogens. The protein is Ethylene-inducing xylanase of Penicillium digitatum (strain Pd1 / CECT 20795) (Green mold).